The chain runs to 582 residues: Formate--tetrahydrofolate ligase (582 aa).

An ATP-binding site is contributed by 65-72 (TPLGEGKT).

The protein belongs to the formate--tetrahydrofolate ligase family.

It carries out the reaction (6S)-5,6,7,8-tetrahydrofolate + formate + ATP = (6R)-10-formyltetrahydrofolate + ADP + phosphate. It participates in one-carbon metabolism; tetrahydrofolate interconversion. This chain is Formate--tetrahydrofolate ligase, found in Vibrio campbellii (strain ATCC BAA-1116).